Consider the following 664-residue polypeptide: Xyloglucan-specific galacturonosyltransferase 1 (664 aa).

Over residues 1–21 (MSLSKHLQKLVHKRESKKQPN) the composition is skewed to basic residues. Positions 1–49 (MSLSKHLQKLVHKRESKKQPNKKMPVSVSKLRRPRTSKKTETGNPEKTL) are disordered. The Cytoplasmic portion of the chain corresponds to 1–71 (MSLSKHLQKL…IFSARSFLYR (71 aa)). Residues 72–92 (VPLTILFLFLIYLWSTSTTVI) form a helical; Signal-anchor for type II membrane protein membrane-spanning segment. Residues 93 to 664 (SGNVVHICIS…SLFKKIAKTV (572 aa)) are Lumenal-facing. N-linked (GlcNAc...) asparagine glycosylation is found at asparagine 126, asparagine 158, asparagine 175, asparagine 181, asparagine 355, asparagine 379, and asparagine 522.

It belongs to the glycosyltransferase 47 family. As to expression, root hair specific. Expressed in roots and young leaves.

It is found in the golgi apparatus membrane. In terms of biological role, xyloglucan-specific galacturonosyltransferase that forms the beta-D-galactosyluronic acid-(1-&gt;2)-alpha-D-xylosyl linkage. Required for root hair development probably by providing important acidic xyloglucans. The chain is Xyloglucan-specific galacturonosyltransferase 1 from Arabidopsis thaliana (Mouse-ear cress).